A 321-amino-acid chain; its full sequence is Serine/threonine-protein phosphatase 4 catalytic subunit 2 (321 aa).

Mn(2+)-binding residues include Asp-64, His-66, Asp-92, and Asn-124. His-125 (proton donor) is an active-site residue. Mn(2+) contacts are provided by His-174 and His-249.

Belongs to the PPP phosphatase family. PP-4 (PP-X) subfamily. Serine/threonine-protein phosphatase 4 (PP4) occurs in different assemblies of the catalytic and one or more regulatory subunits. Mn(2+) is required as a cofactor.

It carries out the reaction O-phospho-L-seryl-[protein] + H2O = L-seryl-[protein] + phosphate. The catalysed reaction is O-phospho-L-threonyl-[protein] + H2O = L-threonyl-[protein] + phosphate. Protein phosphatase which seems to be involved in larval development but not essential for embryogenesis. The polypeptide is Serine/threonine-protein phosphatase 4 catalytic subunit 2 (Caenorhabditis elegans).